Reading from the N-terminus, the 498-residue chain is Guanosine-5'-triphosphate,3'-diphosphate pyrophosphatase (498 aa).

It belongs to the GppA/Ppx family. GppA subfamily.

The enzyme catalyses guanosine 3'-diphosphate 5'-triphosphate + H2O = guanosine 3',5'-bis(diphosphate) + phosphate + H(+). It participates in purine metabolism; ppGpp biosynthesis; ppGpp from GTP: step 2/2. In terms of biological role, catalyzes the conversion of pppGpp to ppGpp. Guanosine pentaphosphate (pppGpp) is a cytoplasmic signaling molecule which together with ppGpp controls the 'stringent response', an adaptive process that allows bacteria to respond to amino acid starvation, resulting in the coordinated regulation of numerous cellular activities. This chain is Guanosine-5'-triphosphate,3'-diphosphate pyrophosphatase, found in Yersinia pseudotuberculosis serotype O:1b (strain IP 31758).